Reading from the N-terminus, the 105-residue chain is Putative ferredoxin-3 (105 aa).

4Fe-4S ferredoxin-type domains follow at residues 17–46 (YLTA…LHGI) and 70–100 (TIMV…HVAA). 8 residues coordinate [4Fe-4S] cluster: cysteine 26, cysteine 29, cysteine 32, cysteine 36, cysteine 80, cysteine 83, cysteine 86, and cysteine 90.

[4Fe-4S] cluster is required as a cofactor.

Ferredoxins are iron-sulfur proteins that transfer electrons in a wide variety of metabolic reactions. This chain is Putative ferredoxin-3 (fdxB), found in Sinorhizobium fredii (strain NBRC 101917 / NGR234).